A 224-amino-acid polypeptide reads, in one-letter code: Casparian strip membrane protein 3 (224 aa).

Residues methionine 1–alanine 30 are disordered. Residues methionine 1 to alanine 57 are Cytoplasmic-facing. Residues isoleucine 58–methionine 78 traverse the membrane as a helical segment. The Extracellular segment spans residues glycine 79–glutamine 105. A helical transmembrane segment spans residues phenylalanine 106–isoleucine 126. Topologically, residues valine 127–arginine 138 are cytoplasmic. Residues leucine 139–alanine 159 form a helical membrane-spanning segment. The Extracellular segment spans residues alanine 160–glutamine 191. Asparagine 168 carries N-linked (GlcNAc...) asparagine glycosylation. Residues alanine 192–valine 212 traverse the membrane as a helical segment. Over alanine 213–tryptophan 224 the chain is Cytoplasmic.

It belongs to the Casparian strip membrane proteins (CASP) family. Homodimer and heterodimers.

It localises to the cell membrane. Functionally, regulates membrane-cell wall junctions and localized cell wall deposition. Required for establishment of the Casparian strip membrane domain (CSD) and the subsequent formation of Casparian strips, a cell wall modification of the root endodermis that determines an apoplastic barrier between the intraorganismal apoplasm and the extraorganismal apoplasm and prevents lateral diffusion. This is Casparian strip membrane protein 3 from Vigna unguiculata (Cowpea).